The sequence spans 93 residues: Stage III sporulation protein D (93 aa).

The HTH deoR-type domain occupies 4-75; sequence YIKERTIKIG…IRHLRGGEAT (72 aa). The segment at residues 21-40 is a DNA-binding region (H-T-H motif); that stretch reads KTVRVIAKEFGVSKSTVHKD.

Its function is as follows. This protein regulates the transcription of sigK, which encodes mother cell chamber RNA polymerase sigma-factor (sigma K). The polypeptide is Stage III sporulation protein D (spoIIID) (Bacillus subtilis (strain 168)).